The primary structure comprises 264 residues: tRNA pseudouridine synthase A (264 aa).

The active-site Nucleophile is the Asp-56. Tyr-114 provides a ligand contact to substrate.

It belongs to the tRNA pseudouridine synthase TruA family. In terms of assembly, homodimer.

It carries out the reaction uridine(38/39/40) in tRNA = pseudouridine(38/39/40) in tRNA. Functionally, formation of pseudouridine at positions 38, 39 and 40 in the anticodon stem and loop of transfer RNAs. In Buchnera aphidicola subsp. Baizongia pistaciae (strain Bp), this protein is tRNA pseudouridine synthase A.